Here is a 462-residue protein sequence, read N- to C-terminus: MAVEDFEAVLKAKYPGKAHAKRVVDLIRKTKPDANGVIYLEGRMTKLLEDNDSPEHFRQRRYFYYLTGCNLADCSFAYDIQSSKSILFIPPIDPDDVIWSGLPLSIDEALSRYDVDEVKFTTEVNSTLAHLAKQSPNSTVFAIANQVSDSVTFLEFGSKDFETVKKAIEVSRVVKDEFEVAMIRKANHISSLAHKAVIERSKAAATEQELYATFLERCVSHAAPEMAYHPILAAGKAAATLHYVDNNAPLKGKQNLLIDAGCEWNNYASDITRTFPLTGTFTKESRDIYDIVLRMQKECTELIKGGMLWDDLHLHAHKVAIDGLLALGILKGDAKEILNARTSAAFFPHGLGHHLGMDTHDTGGNPNPNDPDKLFRYLRLRGHVPAGAVVTVEPGIYFCDFIIKPYLDDHVHSKYIDAAVLNKYWDVGGVRIEDNIHVTENGYVNLTTAIKEVSDVEAVSAK.

Positions 259, 270, 393, and 433 each coordinate Mn(2+).

The protein belongs to the peptidase M24B family. Mn(2+) serves as cofactor.

The enzyme catalyses Release of any N-terminal amino acid, including proline, that is linked to proline, even from a dipeptide or tripeptide.. Its function is as follows. Catalyzes the removal of a penultimate prolyl residue from the N-termini of peptides. This Metarhizium robertsii (strain ARSEF 23 / ATCC MYA-3075) (Metarhizium anisopliae (strain ARSEF 23)) protein is Probable Xaa-Pro aminopeptidase pepP (pepP).